The sequence spans 229 residues: Large ribosomal subunit protein uL1 (229 aa).

This sequence belongs to the universal ribosomal protein uL1 family. As to quaternary structure, part of the 50S ribosomal subunit.

Binds directly to 23S rRNA. The L1 stalk is quite mobile in the ribosome, and is involved in E site tRNA release. Its function is as follows. Protein L1 is also a translational repressor protein, it controls the translation of the L11 operon by binding to its mRNA. The sequence is that of Large ribosomal subunit protein uL1 from Desulforamulus reducens (strain ATCC BAA-1160 / DSM 100696 / MI-1) (Desulfotomaculum reducens).